Consider the following 239-residue polypeptide: 1-(5-phosphoribosyl)-5-[(5-phosphoribosylamino)methylideneamino] imidazole-4-carboxamide isomerase (239 aa).

The active-site Proton acceptor is D8. D129 (proton donor) is an active-site residue.

Belongs to the HisA/HisF family.

Its subcellular location is the cytoplasm. It carries out the reaction 1-(5-phospho-beta-D-ribosyl)-5-[(5-phospho-beta-D-ribosylamino)methylideneamino]imidazole-4-carboxamide = 5-[(5-phospho-1-deoxy-D-ribulos-1-ylimino)methylamino]-1-(5-phospho-beta-D-ribosyl)imidazole-4-carboxamide. Its pathway is amino-acid biosynthesis; L-histidine biosynthesis; L-histidine from 5-phospho-alpha-D-ribose 1-diphosphate: step 4/9. In Bacillus cereus (strain AH820), this protein is 1-(5-phosphoribosyl)-5-[(5-phosphoribosylamino)methylideneamino] imidazole-4-carboxamide isomerase.